Reading from the N-terminus, the 154-residue chain is NADPH-dependent 7-cyano-7-deazaguanine reductase (154 aa).

Residues 1–13 (MSVTDVSGLSQLG) show a composition bias toward polar residues. A disordered region spans residues 1–30 (MSVTDVSGLSQLGTKVDTPESPEKAVLEKV). Residues 17–27 (DTPESPEKAVL) show a composition bias toward basic and acidic residues. The active-site Thioimide intermediate is the Cys-52. Catalysis depends on Asp-59, which acts as the Proton donor. Residues 74–76 (VES) and 93–94 (HE) contribute to the substrate site.

This sequence belongs to the GTP cyclohydrolase I family. QueF type 1 subfamily.

It localises to the cytoplasm. It catalyses the reaction 7-aminomethyl-7-carbaguanine + 2 NADP(+) = 7-cyano-7-deazaguanine + 2 NADPH + 3 H(+). It participates in tRNA modification; tRNA-queuosine biosynthesis. Functionally, catalyzes the NADPH-dependent reduction of 7-cyano-7-deazaguanine (preQ0) to 7-aminomethyl-7-deazaguanine (preQ1). In Agrobacterium fabrum (strain C58 / ATCC 33970) (Agrobacterium tumefaciens (strain C58)), this protein is NADPH-dependent 7-cyano-7-deazaguanine reductase.